A 928-amino-acid polypeptide reads, in one-letter code: DNA polymerase I (928 aa).

The 323-residue stretch at 1–323 folds into the 5'-3' exonuclease domain; the sequence is MVQIPENPLI…IDESPSEPAA (323 aa). Residues 324 to 517 form the 3'-5' exonuclease domain; it reads ALSYENYVTI…LHLKMWPELQ (194 aa). Positions 324–928 are klenow fragment; the sequence is ALSYENYVTI…GSGENWDQAH (605 aa). Residues 521–928 are polymerase; it reads GPLNVFENIE…GSGENWDQAH (408 aa).

It belongs to the DNA polymerase type-A family. As to quaternary structure, single-chain monomer with multiple functions.

The enzyme catalyses DNA(n) + a 2'-deoxyribonucleoside 5'-triphosphate = DNA(n+1) + diphosphate. Its function is as follows. In addition to polymerase activity, this DNA polymerase exhibits 3'-5' and 5'-3' exonuclease activity. It is able to utilize nicked circular duplex DNA as a template and can unwind the parental DNA strand from its template. This Salmonella typhimurium (strain LT2 / SGSC1412 / ATCC 700720) protein is DNA polymerase I (polA).